Here is a 953-residue protein sequence, read N- to C-terminus: Serine-aspartate repeat-containing protein C (953 aa).

Positions M1–A50 are cleaved as a signal peptide. Residues A51–T160 are disordered. Positions A51–K495 are ligand binding A region. A compositionally biased stretch (polar residues) spans G56–N71. A compositionally biased stretch (basic and acidic residues) spans K72 to K83. Positions D84–P114 are enriched in polar residues. Residues Q115–N132 show a composition bias toward low complexity. Residues D133–T160 show a composition bias toward polar residues. CNA-B domains lie at K496–P606 and K607–T717. A disordered region spans residues T678–G933. Composition is skewed to acidic residues over residues T685–E695 and Y712–S892. The LPXTG sorting signal motif lies at L916–G920. Residues E918–G933 are compositionally biased toward low complexity. Pentaglycyl murein peptidoglycan amidated threonine is present on T919. A propeptide spans G920–K953 (removed by sortase).

Belongs to the serine-aspartate repeat-containing protein (SDr) family. In terms of assembly, homodimerizes; via N2-Domain. Interacts with host NRXN1; this interaction mediates bacterial attachment to host cells.

The protein localises to the secreted. Its subcellular location is the cell wall. Its function is as follows. Cell surface-associated calcium-binding protein which plays an important role in adhesion and pathogenesis. Mediates interactions with components of the extracellular matrix such as host NRXN1 to promote bacterial adhesion. The sequence is that of Serine-aspartate repeat-containing protein C (sdrC) from Staphylococcus aureus (strain Mu50 / ATCC 700699).